The sequence spans 394 residues: C-19 steroid 1alpha-hydroxylase (394 aa).

Residues histidine 81, arginine 85, arginine 281, glycine 335, histidine 338, and cysteine 340 each coordinate heme b.

Belongs to the cytochrome P450 family. It depends on heme b as a cofactor.

The enzyme catalyses testosterone + 2 reduced [2Fe-2S]-[ferredoxin] + O2 + 2 H(+) = 1alpha-hydroxytestosterone + 2 oxidized [2Fe-2S]-[ferredoxin] + H2O. It carries out the reaction androst-4-ene-3,17-dione + 2 reduced [2Fe-2S]-[ferredoxin] + O2 + 2 H(+) = 1alpha-hydroxyandrost-4-ene-3,17-dione + 2 oxidized [2Fe-2S]-[ferredoxin] + H2O. Hydroxylase that can catalyze the in vitro conversion of the sesquiterpenoid nootkatone, a natural organic compound produced by some plants, to at least five hydrophilic products. The native ferredoxin reductase FdR_B and either Fdx2 or Fdx8 ferredoxins can act as the redox partners for the conversion of nootkatone. In terms of biological role, in addition, acts as a steroid 1alpha-hydroxylase, when associated in vitro with the surrogate redox partners bovine adrenodoxin (Adx) and adrenodoxin reductase (Adr). Acts on several C-19 steroid substrates, including testosterone and androstenedione, which are hydroxylated to 1alpha-hydroxytestosterone and 1alpha-hydroxyandrostenedione, respectively. Can use their derivatives testosterone-acetate and 11-oxoandrostenedione, but not vitamin D3 and 25-hydroxyvitamin D3. Also catalyzes the hydroxylation of the C-21 steroid 11-deoxycorticosterone to 1alpha-hydroxy-11-deoxycorticosterone. Catalyzes the hydroxylation of the C-21 steroid progesterone, leading to the formation of seven products: two major (1alpha-hydroxyprogesterone and 17alpha-hydroxyprogesterone) and five minor products. The polypeptide is C-19 steroid 1alpha-hydroxylase (Sorangium cellulosum (strain So ce56) (Polyangium cellulosum (strain So ce56))).